The following is a 145-amino-acid chain: Hemoglobin fetal subunit beta (145 aa).

The Globin domain occupies Met-1–His-145. Residues His-62 and His-91 each coordinate heme b.

This sequence belongs to the globin family. In terms of assembly, heterotetramer of two alpha chains and two beta chains.

The protein is Hemoglobin fetal subunit beta of Ovis aries (Sheep).